A 430-amino-acid chain; its full sequence is Multisubstrate adapter protein soc-1 (430 aa).

Residues 7-133 form the PH domain; it reads NIILEGSLKR…WVNEICKLCK (127 aa). Low complexity predominate over residues 192-222; sequence SHNSLPSNPNYNNLPDPLESSRSETSSMYSS. 3 disordered regions span residues 192 to 246, 275 to 303, and 315 to 377; these read SHNS…TRHT, EDAE…SEGF, and RRAP…RNLD. The span at 341–369 shows a compositional bias: polar residues; the sequence is RNLSRNGVNENGNYSATFSSRTSNYQQSE.

As to quaternary structure, interacts (via C-terminus) with sem-5 (probably via SH3 domain 2). Interacts with nicotinic acetylcholine receptor. In terms of processing, may be phosphorylated.

Adapter protein which modulates signaling mediated by several receptor tyrosine kinases. Plays a role in fluid homeostasis, probably downstream of receptor egl-15 and upstream of let-60/Ras. Involved in nicotinic acetylcholine receptor (nAChR)-mediated sensitivity to nicotine and levamisole and gamma-aminobutyric acid (GABA)receptor-mediated sensitivity to muscimol. Regulates synaptic levels of nAchR receptor subunit lev-1 and unc-38, and GABA receptor subunit unc-49 in the nerve cord, probably downstream of egl-15. Regulates motility. During the formation of neuromuscular junctions at the larval stage, down-regulates membrane protrusion from body wall muscles, probably downstream of egl-15. Promotes vulva induction and down-regulates fertility, probably downstream of receptor let-23. Down-regulates daf-2-mediated repression of dauer formation and positively regulates daf-2-mediated aging. May be involved in the recruitment of phosphatase ptp-2 to egl-15. The sequence is that of Multisubstrate adapter protein soc-1 from Caenorhabditis elegans.